Reading from the N-terminus, the 412-residue chain is D-xylonate dehydratase (412 aa).

In terms of assembly, homooctamer.

The catalysed reaction is D-xylonate = 2-dehydro-3-deoxy-D-arabinonate + H2O. Functionally, NADP-dependent D-xylose dehydrogenase involved in the degradation of D-xylose, a major component of hemicelluloses such as xylan. Catalyzes the third reaction in the xylose utilization pathway through dehydratation of D-xylonate into 2-dehydro-3-deoxy-D-xylonate. In Haloferax volcanii (strain ATCC 29605 / DSM 3757 / JCM 8879 / NBRC 14742 / NCIMB 2012 / VKM B-1768 / DS2) (Halobacterium volcanii), this protein is D-xylonate dehydratase.